Consider the following 345-residue polypeptide: Aspartate--ammonia ligase (345 aa).

This sequence belongs to the class-II aminoacyl-tRNA synthetase family. AsnA subfamily.

The protein localises to the cytoplasm. The enzyme catalyses L-aspartate + NH4(+) + ATP = L-asparagine + AMP + diphosphate + H(+). The protein operates within amino-acid biosynthesis; L-asparagine biosynthesis; L-asparagine from L-aspartate (ammonia route): step 1/1. This Parabacteroides distasonis (strain ATCC 8503 / DSM 20701 / CIP 104284 / JCM 5825 / NCTC 11152) protein is Aspartate--ammonia ligase.